A 207-amino-acid polypeptide reads, in one-letter code: MPSLLISVLFLHIAIYIINTIAASTIDSLLWLIYMKLPTSASCIAREQHQMKLEVVQLKREMNATSSQDEFAKWAKLRRRHDKALEEYEVKNKQFSRFKSFFDVAVKALRWAGTSGLIVFLQFWFSKTPIFTLPPSWIPWQVEWVLSFPRAPMGTVSIQVWGGACAVVVALIGEAIGATVRYLYASKDSMEAIKVGAGAVEKEKKRQ.

Residues 1 to 4 (MPSL) are Lumenal-facing. A helical transmembrane segment spans residues 5-24 (LISVLFLHIAIYIINTIAAS). The Cytoplasmic segment spans residues 25-110 (TIDSLLWLIY…FFDVAVKALR (86 aa)). Residues 44-97 (IAREQHQMKLEVVQLKREMNATSSQDEFAKWAKLRRRHDKALEEYEVKNKQFSR) are a coiled coil. A helical membrane pass occupies residues 111 to 131 (WAGTSGLIVFLQFWFSKTPIF). The Lumenal segment spans residues 132 to 155 (TLPPSWIPWQVEWVLSFPRAPMGT). A helical transmembrane segment spans residues 156 to 172 (VSIQVWGGACAVVVALI). The Cytoplasmic portion of the chain corresponds to 173 to 207 (GEAIGATVRYLYASKDSMEAIKVGAGAVEKEKKRQ).

Belongs to the WRB/GET1 family. As to quaternary structure, interacts with GET3.

It localises to the endoplasmic reticulum membrane. In terms of biological role, required for the post-translational delivery of tail-anchored (TA) proteins to the endoplasmic reticulum. Acts as a membrane receptor for soluble GET3, which recognizes and selectively binds the transmembrane domain of TA proteins in the cytosol. The polypeptide is Protein GET1 (Paracoccidioides brasiliensis (strain Pb18)).